Here is a 215-residue protein sequence, read N- to C-terminus: Disulfide-bond oxidoreductase YfcG (215 aa).

Residues 1–87 (MIDLYFAPTP…YLAEKTGLFL (87 aa)) enclose the GST N-terminal domain. Residues N11, Q38, R40, I52, 71 to 72 (ES), and R132 each bind glutathione. Positions 90–215 (ETRERAATLQ…AQLGDERSDS (126 aa)) constitute a GST C-terminal domain.

This sequence belongs to the GST superfamily. Nu-class GSH transferase family. As to quaternary structure, homodimer.

Exhibits a very robust glutathione (GSH)-dependent disulfide-bond reductase activity toward the model substrate, 2-hydroxyethyl disulfide; the actual physiological substrates are not known. Also has a low GSH-dependent hydroperoxidase activity toward cumene hydroperoxide, but does not reduce H(2)O(2), tert-butyl hydroperoxide, benzyl peroxide, or lauroyl peroxide. Exhibits little or no GSH transferase activity with most typical electrophilic substrates, and has no detectable transferase activity using glutathionylspermidine (GspSH) as the nucleophilic substrate. Is involved in defense against oxidative stress, probably via its peroxidase activity. This Escherichia coli (strain K12) protein is Disulfide-bond oxidoreductase YfcG (yfcG).